The following is a 321-amino-acid chain: Hydropyrene synthase (321 aa).

Mg(2+) is bound by residues D82, N225, S229, and E233. A DDxx(x)D/E motif motif is present at residues 82-87; sequence DDRAID. Positions 225–233 match the NDxxSxxxD/E motif motif; it reads NDLHSFARE.

The protein belongs to the terpene synthase family. The cofactor is Mg(2+).

It catalyses the reaction (2E,6E,10E)-geranylgeranyl diphosphate = hydropyrene + diphosphate. The catalysed reaction is (2E,6E,10E)-geranylgeranyl diphosphate + H2O = hydropyrenol + diphosphate. It carries out the reaction (2E,6E,10E)-geranylgeranyl diphosphate = isoelisabethatriene + diphosphate. It participates in secondary metabolite biosynthesis; terpenoid biosynthesis. Its function is as follows. Terpene synthase that catalyzes the conversion of geranylgeranyl diphosphate (GGPP) into a mixture of diterpenes, including hydropyrene (HP), hydropyrenol (HPol), isoelisabethatriene and traces of isoelisabethatriene B. Hydropyrene is the main product. Some other diterpenoids are also produced in very low quantities. The sequence is that of Hydropyrene synthase from Streptomyces clavuligerus.